The following is a 185-amino-acid chain: Flavodoxin (185 aa).

The 156-residue stretch at 4–159 (VLVIYDTRTG…ACRRLGRRLA (156 aa)) folds into the Flavodoxin-like domain.

Belongs to the flavodoxin family. Requires FMN as cofactor.

Its function is as follows. Low-potential electron donor to a number of redox enzymes. This is Flavodoxin (fldA) from Aquifex aeolicus (strain VF5).